The following is a 462-amino-acid chain: Integrator complex subunit 12 (462 aa).

Residues 42-132 are disordered; sequence GIDSSYRPSQ…PETQSSPITV (91 aa). The span at 59–86 shows a compositional bias: polar residues; the sequence is ISSTKNISIKQEPKISSSLPSGNNNGKV. A Glycyl lysine isopeptide (Lys-Gly) (interchain with G-Cter in SUMO2) cross-link involves residue Lys-68. A compositionally biased stretch (basic and acidic residues) spans 88-124; the sequence is TTEKVKKEAEKRPADKMKSDITEGVDIPKKPRLEKPE. Phosphoserine is present on Ser-128. A PHD-type zinc finger spans residues 159 to 215; that stretch reads GLACVVCRQMMVASGNQLVECQECHNLYHRDCHKPQVTDKEANDPRLVWYCARCTRQ. Lys-254 participates in a covalent cross-link: Glycyl lysine isopeptide (Lys-Gly) (interchain with G-Cter in SUMO2). The span at 301–328 shows a compositional bias: polar residues; that stretch reads SSAGPSTAKLSSTTQNNTGKPATSSANQ. The tract at residues 301–462 is disordered; that stretch reads SSAGPSTAKL…KKAAQKKLKK (162 aa). Composition is skewed to low complexity over residues 347–358 and 382–437; these read KIGSNNSTTPTV and VSKV…GPTS. Residues 449-462 are compositionally biased toward basic residues; the sequence is QMVKKKAAQKKLKK.

Belongs to the Integrator subunit 12 family. Component of the Integrator complex, composed of core subunits INTS1, INTS2, INTS3, INTS4, INTS5, INTS6, INTS7, INTS8, INTS9/RC74, INTS10, INTS11/CPSF3L, INTS12, INTS13, INTS14 and INTS15. The core complex associates with protein phosphatase 2A subunits PPP2CA and PPP2R1A, to form the Integrator-PP2A (INTAC) complex. Dephosphorylated at Ser-128 by the PNUTS-PP1 complex, promoting RNA polymerase II transcription pause-release.

It localises to the nucleus. In terms of biological role, component of the integrator complex, a multiprotein complex that terminates RNA polymerase II (Pol II) transcription in the promoter-proximal region of genes. The integrator complex provides a quality checkpoint during transcription elongation by driving premature transcription termination of transcripts that are unfavorably configured for transcriptional elongation: the complex terminates transcription by (1) catalyzing dephosphorylation of the C-terminal domain (CTD) of Pol II subunit POLR2A/RPB1 and SUPT5H/SPT5, (2) degrading the exiting nascent RNA transcript via endonuclease activity and (3) promoting the release of Pol II from bound DNA. The integrator complex is also involved in terminating the synthesis of non-coding Pol II transcripts, such as enhancer RNAs (eRNAs), small nuclear RNAs (snRNAs), telomerase RNAs and long non-coding RNAs (lncRNAs). Mediates recruitment of cytoplasmic dynein to the nuclear envelope, probably as component of the integrator complex. The sequence is that of Integrator complex subunit 12 (INTS12) from Pongo abelii (Sumatran orangutan).